Here is a 463-residue protein sequence, read N- to C-terminus: D(2)-like dopamine receptor (463 aa).

Topologically, residues 1–35 (MDVFTQYAYNDSIFDNGTWSANETTKDETHPYNYY) are extracellular. Asn10, Asn16, and Asn22 each carry an N-linked (GlcNAc...) asparagine glycan. Residues 36–58 (AMLLTLLIFVIVFGNVLVCMAVS) form a helical membrane-spanning segment. Residues 59–68 (REKALQTTTN) lie on the Cytoplasmic side of the membrane. The chain crosses the membrane as a helical span at residues 69–91 (YLIVSLAVADLLVATLVMPWVVY). Residues 92–106 (LEVVGEWRFSKIHCD) are Extracellular-facing. Cys105 and Cys183 are oxidised to a cystine. Residues 107 to 128 (IFVTLDVMMCTASILNLCAISI) form a helical membrane-spanning segment. Over 129–149 (DRYTAVAMPMLYNTRYSSRRR) the chain is Cytoplasmic. The chain crosses the membrane as a helical span at residues 150-170 (VTVMISVVWVLSFAISCPLLF). The Extracellular segment spans residues 171 to 189 (GLNNTATRDQSLCFIANPA). The helical transmembrane segment at 190-214 (FVVYSSIVSFYVPFIVTLLVYVQIY) threads the bilayer. Over 215–392 (VVLRKRRKRV…SQQKEKKATQ (178 aa)) the chain is Cytoplasmic. Residues 295-362 (CGGSHKQPPP…KEAQGNPAPV (68 aa)) are disordered. Residues 315-329 (PATSHQLLMSTKANA) are compositionally biased toward polar residues. The span at 341-353 (EGQRTEKNGDPTK) shows a compositional bias: basic and acidic residues. The chain crosses the membrane as a helical span at residues 393–414 (MLAIVLGVFIICWLPFFITHIL). Residues 415–429 (NTHCTRCKVPAEMYN) are Extracellular-facing. Cys418 and Cys421 are disulfide-bonded. A helical membrane pass occupies residues 430–451 (AFTWLGYVNSAVNPIIYTTFNV). Residues 452–463 (EFRKAFIKILHC) are Cytoplasmic-facing.

Belongs to the G-protein coupled receptor 1 family.

It localises to the cell membrane. Functionally, receptor for dopamine. In Takifugu rubripes (Japanese pufferfish), this protein is D(2)-like dopamine receptor (d215).